Here is a 616-residue protein sequence, read N- to C-terminus: Chaperone protein HscA homolog (616 aa).

The protein belongs to the heat shock protein 70 family.

Chaperone involved in the maturation of iron-sulfur cluster-containing proteins. Has a low intrinsic ATPase activity which is markedly stimulated by HscB. The chain is Chaperone protein HscA homolog from Mannheimia succiniciproducens (strain KCTC 0769BP / MBEL55E).